Consider the following 200-residue polypeptide: uncharacterized protein (200 aa).

The tract at residues 149–200 (APDPGGSVATEEVLRSDDRDSHTQDSASEWPEGNDSVGSAAMRIDLSRIGGT) is disordered. A compositionally biased stretch (basic and acidic residues) spans 160–171 (EVLRSDDRDSHT).

This sequence to A.tumefaciens Ti plasmid conjugal transfer region I ORFR2 and ORFR3.

This is an uncharacterized protein from Sinorhizobium fredii (strain NBRC 101917 / NGR234).